The sequence spans 70 residues: MTKHDHGLKEKVEGTIDKVKGEVKEVVGKVTDNKKLQAEGKWDKVKGTAKDTVGNVKEKVHEYKEHKKEK.

The protein belongs to the UPF0337 (CsbD) family.

The chain is UPF0337 protein BC_3635 from Bacillus cereus (strain ATCC 14579 / DSM 31 / CCUG 7414 / JCM 2152 / NBRC 15305 / NCIMB 9373 / NCTC 2599 / NRRL B-3711).